The following is a 177-amino-acid chain: Large ribosomal subunit protein uL6 (177 aa).

It belongs to the universal ribosomal protein uL6 family. Part of the 50S ribosomal subunit.

In terms of biological role, this protein binds to the 23S rRNA, and is important in its secondary structure. It is located near the subunit interface in the base of the L7/L12 stalk, and near the tRNA binding site of the peptidyltransferase center. The sequence is that of Large ribosomal subunit protein uL6 from Bordetella avium (strain 197N).